Here is a 385-residue protein sequence, read N- to C-terminus: Zinc finger protein B385R (385 aa).

The C2H2-type zinc-finger motif lies at 166-190; that stretch reads LQCPNCGCIQELMGTIFDETHFYNH.

Belongs to the asfivirus B385R family.

This Ornithodoros (relapsing fever ticks) protein is Zinc finger protein B385R.